The chain runs to 330 residues: MTHTLRVIFAGTPEFAAAALAAIHEAGFPVPLVLTQPDRPAGRGMKLQASAVKRYAVEHGMTVAQPPSLRRAGKYPAEAADAIELLRTTQHDVMVVAAYGLLLPQEVLDIPRAGCINIHASLLPRWRGAAPIHRAIEAGDAETGVTLMQMDVGLDTGAMIEEARIAIAPDDTTATLHDRLAADGARLIVDALVRLERDGTLPATPQPADGVTYAEKIGKHEAALDWRKPADVLARQVRAFDPFPGGVATLDGAAIKLWAAEPVAARGTMANAAPGTIVEAAPEGVVVACGSGALRVTQLQKPGGKRLPAREFLAGSPLAAGQRFALPDVD.

121–124 (SLLP) contacts (6S)-5,6,7,8-tetrahydrofolate.

This sequence belongs to the Fmt family.

It catalyses the reaction L-methionyl-tRNA(fMet) + (6R)-10-formyltetrahydrofolate = N-formyl-L-methionyl-tRNA(fMet) + (6S)-5,6,7,8-tetrahydrofolate + H(+). Attaches a formyl group to the free amino group of methionyl-tRNA(fMet). The formyl group appears to play a dual role in the initiator identity of N-formylmethionyl-tRNA by promoting its recognition by IF2 and preventing the misappropriation of this tRNA by the elongation apparatus. In Burkholderia cenocepacia (strain ATCC BAA-245 / DSM 16553 / LMG 16656 / NCTC 13227 / J2315 / CF5610) (Burkholderia cepacia (strain J2315)), this protein is Methionyl-tRNA formyltransferase.